Consider the following 92-residue polypeptide: Phospholemman (92 aa).

Positions 1–20 are cleaved as a signal peptide; the sequence is MAYLHHTLLVCMGLLAMANA. Residues 22 to 35 are Extracellular-facing; it reads APQEQDPFTYDYQS. A helical transmembrane segment spans residues 36–56; that stretch reads LRIGGLIIAGILFILGILIIL. Topologically, residues 57–92 are cytoplasmic; sequence KRGAWERFDTARRTGEPDEEEGTFRSSIRRLSTRRR. The segment at 67-92 is disordered; sequence ARRTGEPDEEEGTFRSSIRRLSTRRR. T79 bears the Phosphothreonine mark. S82 is subject to Phosphoserine. S83 carries the post-translational modification Phosphoserine; by PKA and PKC. Basic residues predominate over residues 83-92; it reads SIRRLSTRRR. S88 carries the phosphoserine; by PKA modification. T89 bears the Phosphothreonine; by PKC mark.

Belongs to the FXYD family. Homotetramer. Monomer. Regulatory subunit of the sodium/potassium-transporting ATPase (NKA) which is composed of a catalytic alpha subunit, a non-catalytic beta subunit and an additional regulatory subunit. The monomeric form associates with NKA while the oligomeric form does not. Interacts with the catalytic alpha-1 subunit ATP1A1. Also interacts with the catalytic alpha-2 and alpha-3 subunits ATP1A2 and ATP1A3. Very little interaction with ATP1A1, ATP1A2 or ATP1A3 when phosphorylated at Ser-83. Interacts with the non-catalytic beta-1 subunit ATP1B1. Oxidative stress decreases interaction with ATP1A1 but increases interaction with ATP1B1. Major plasma membrane substrate for cAMP-dependent protein kinase (PKA) and protein kinase C (PKC) in several different tissues. Phosphorylated in response to insulin and adrenergic stimulation. Phosphorylation at Ser-88 stimulates sodium/potassium-transporting ATPase activity while the unphosphorylated form inhibits sodium/potassium-transporting ATPase activity. Phosphorylation increases tetramerization, decreases binding to ATP1A1 and reduces inhibition of ATP1A1 activity. Phosphorylation at Ser-83 leads to greatly reduced interaction with ATP1A1, ATP1A2 and ATP1A3. May be phosphorylated by DMPK. Post-translationally, palmitoylation increases half-life and stability and is enhanced upon phosphorylation at Ser-88 by PKA. In terms of processing, glutathionylated. As to expression, expressed in ventricular myocytes (at protein level).

Its subcellular location is the cell membrane. The protein resides in the sarcolemma. It is found in the apical cell membrane. The protein localises to the membrane. It localises to the caveola. Its subcellular location is the T-tubule. Associates with and regulates the activity of the sodium/potassium-transporting ATPase (NKA) which transports Na(+) out of the cell and K(+) into the cell. Inhibits NKA activity in its unphosphorylated state and stimulates activity when phosphorylated. Reduces glutathionylation of the NKA beta-1 subunit ATP1B1, thus reversing glutathionylation-mediated inhibition of ATP1B1. Contributes to female sexual development by maintaining the excitability of neurons which secrete gonadotropin-releasing hormone. This chain is Phospholemman, found in Oryctolagus cuniculus (Rabbit).